Reading from the N-terminus, the 93-residue chain is Cytochrome c (93 aa).

Residues 1–13 (AALPPGDAAAAQG) are compositionally biased toward low complexity. A disordered region spans residues 1–21 (AALPPGDAAAAQGGSNGVGPN). Methionine 70 contacts heme c.

This sequence belongs to the cytochrome c family. In terms of processing, binds 1 heme c group covalently per subunit.

It localises to the mitochondrion intermembrane space. Its function is as follows. Electron carrier protein. The oxidized form of the cytochrome c heme group can accept an electron from the heme group of the cytochrome c1 subunit of cytochrome reductase. Cytochrome c then transfers this electron to the cytochrome oxidase complex, the final protein carrier in the mitochondrial electron-transport chain. The sequence is that of Cytochrome c from Trypanosoma brucei brucei.